Consider the following 394-residue polypeptide: Phosphoglycerate kinase (394 aa).

Residues 21 to 23, arginine 36, 59 to 62, arginine 118, and arginine 151 contribute to the substrate site; these read DFN and HMGR. ATP is bound by residues lysine 202, glutamate 324, and 350–353; that span reads GGDS.

It belongs to the phosphoglycerate kinase family. In terms of assembly, monomer.

Its subcellular location is the cytoplasm. The catalysed reaction is (2R)-3-phosphoglycerate + ATP = (2R)-3-phospho-glyceroyl phosphate + ADP. Its pathway is carbohydrate degradation; glycolysis; pyruvate from D-glyceraldehyde 3-phosphate: step 2/5. In Exiguobacterium sibiricum (strain DSM 17290 / CCUG 55495 / CIP 109462 / JCM 13490 / 255-15), this protein is Phosphoglycerate kinase.